We begin with the raw amino-acid sequence, 522 residues long: Alanine aminotransferase 2 (522 aa).

An N6-(pyridoxal phosphate)lysine modification is found at Lys340. Lys414, Lys504, and Lys511 each carry N6-acetyllysine.

It belongs to the class-I pyridoxal-phosphate-dependent aminotransferase family. Alanine aminotransferase subfamily. In terms of assembly, homodimer. Pyridoxal 5'-phosphate serves as cofactor. As to expression, specifically induced in fatty liver. Highly expressed in muscle, liver and white adipose tissue. Moderately expressed in brain and kidney and expressed at low levels in the heart.

The catalysed reaction is L-alanine + 2-oxoglutarate = pyruvate + L-glutamate. It functions in the pathway amino-acid degradation; L-alanine degradation via transaminase pathway; pyruvate from L-alanine: step 1/1. Its function is as follows. Catalyzes the reversible transamination between alanine and 2-oxoglutarate to form pyruvate and glutamate. The chain is Alanine aminotransferase 2 (Gpt2) from Mus musculus (Mouse).